A 254-amino-acid chain; its full sequence is Persulfide dioxygenase ETHE1, mitochondrial (254 aa).

The N-terminal 7 residues, 1-7, are a transit peptide targeting the mitochondrion; it reads MAGSVLK. Phosphoserine is present on residues S14 and S19. K32 is subject to N6-acetyllysine; alternate. An N6-succinyllysine; alternate modification is found at K32. N6-acetyllysine is present on K66. 3 residues coordinate Fe cation: H79, H135, and D154.

Belongs to the metallo-beta-lactamase superfamily. Glyoxalase II family. Homodimer. Monomer. Interacts with TST. May interact with RELA. Requires Fe(2+) as cofactor.

The protein resides in the cytoplasm. It is found in the nucleus. It localises to the mitochondrion matrix. It catalyses the reaction S-sulfanylglutathione + O2 + H2O = sulfite + glutathione + 2 H(+). With respect to regulation, glutathione increases enzyme activity. In terms of biological role, sulfur dioxygenase that plays an essential role in hydrogen sulfide catabolism in the mitochondrial matrix. Hydrogen sulfide (H(2)S) is first oxidized by SQRDL, giving rise to cysteine persulfide residues. ETHE1 consumes molecular oxygen to catalyze the oxidation of the persulfide, once it has been transferred to a thiophilic acceptor, such as glutathione (R-SSH). Plays an important role in metabolic homeostasis in mitochondria by metabolizing hydrogen sulfide and preventing the accumulation of supraphysiological H(2)S levels that have toxic effects, due to the inhibition of cytochrome c oxidase. First described as a protein that can shuttle between the nucleus and the cytoplasm and suppress p53-induced apoptosis by sequestering the transcription factor RELA/NFKB3 in the cytoplasm and preventing its accumulation in the nucleus. The protein is Persulfide dioxygenase ETHE1, mitochondrial (ETHE1) of Bos taurus (Bovine).